The sequence spans 186 residues: Large ribosomal subunit protein uL22 (186 aa).

Ser-158 carries the post-translational modification Phosphoserine. A disordered region spans residues 159–186; sequence KATDDEPAKKKLSKKKLQRQKEKMLRSE. Position 161 is a phosphothreonine (Thr-161). Positions 177-186 are enriched in basic and acidic residues; it reads RQKEKMLRSE.

This sequence belongs to the universal ribosomal protein uL22 family.

In Drosophila melanogaster (Fruit fly), this protein is Large ribosomal subunit protein uL22 (RpL17).